The following is a 61-amino-acid chain: Small ribosomal subunit protein uS14 (61 aa).

Residues Cys24, Cys27, Cys40, and Cys43 each contribute to the Zn(2+) site.

Belongs to the universal ribosomal protein uS14 family. Zinc-binding uS14 subfamily. In terms of assembly, part of the 30S ribosomal subunit. Contacts proteins S3 and S10. Zn(2+) serves as cofactor.

Functionally, binds 16S rRNA, required for the assembly of 30S particles and may also be responsible for determining the conformation of the 16S rRNA at the A site. In Bifidobacterium longum (strain DJO10A), this protein is Small ribosomal subunit protein uS14.